Here is a 167-residue protein sequence, read N- to C-terminus: SsrA-binding protein (167 aa).

The protein belongs to the SmpB family.

Its subcellular location is the cytoplasm. Functionally, required for rescue of stalled ribosomes mediated by trans-translation. Binds to transfer-messenger RNA (tmRNA), required for stable association of tmRNA with ribosomes. tmRNA and SmpB together mimic tRNA shape, replacing the anticodon stem-loop with SmpB. tmRNA is encoded by the ssrA gene; the 2 termini fold to resemble tRNA(Ala) and it encodes a 'tag peptide', a short internal open reading frame. During trans-translation Ala-aminoacylated tmRNA acts like a tRNA, entering the A-site of stalled ribosomes, displacing the stalled mRNA. The ribosome then switches to translate the ORF on the tmRNA; the nascent peptide is terminated with the 'tag peptide' encoded by the tmRNA and targeted for degradation. The ribosome is freed to recommence translation, which seems to be the essential function of trans-translation. This chain is SsrA-binding protein, found in Stenotrophomonas maltophilia (strain K279a).